A 247-amino-acid chain; its full sequence is MEIAMKVERVVAWLREQVEESGTTGLVVGISGGIDSAVVANLIYRAFPNQSLGVILPIRSHQDDIDDGLAVAIACGIKHTTVNLDNEHENVLSKAINALQKLELYDENKLRISDANLRARLRMSTLYTIANNVNSLVVGTDNAAELHTGYFTKYGDGGVDILPIAGLTKREVYQWGEYLGVPQSVLNREPSAGLWEGQTDEKEMGTTYEMIDDFLEGKEVPQKDKEIIERLHGISHHKRVMPPLPNI.

29 to 36 serves as a coordination point for ATP; sequence GISGGIDS. Asp-35 is a binding site for Mg(2+). Arg-120 is a binding site for deamido-NAD(+). ATP is bound at residue Thr-140. A Mg(2+)-binding site is contributed by Glu-145. Deamido-NAD(+) contacts are provided by Lys-153 and Asp-160. Residues Lys-169 and Ser-191 each coordinate ATP. Residue 237-238 participates in deamido-NAD(+) binding; sequence HK.

Belongs to the NAD synthetase family. As to quaternary structure, homodimer.

The catalysed reaction is deamido-NAD(+) + NH4(+) + ATP = AMP + diphosphate + NAD(+) + H(+). It functions in the pathway cofactor biosynthesis; NAD(+) biosynthesis; NAD(+) from deamido-NAD(+) (ammonia route): step 1/1. Catalyzes the ATP-dependent amidation of deamido-NAD to form NAD. Uses ammonia as a nitrogen source. This is NH(3)-dependent NAD(+) synthetase from Alkaliphilus metalliredigens (strain QYMF).